The primary structure comprises 281 residues: Deoxyribonuclease-1 (281 aa).

Positions 1 to 21 are cleaved as a signal peptide; it reads MRSEMLTALLTLAVLLQVAGS. The N-linked (GlcNAc...) asparagine glycan is linked to Asn-39. Glu-99 is an active-site residue. Cys-122 and Cys-125 are disulfide-bonded. His-155 is an active-site residue.

This sequence belongs to the DNase I family. It depends on Ca(2+) as a cofactor. The cofactor is Mg(2+). As to expression, equivalent levels in pancreas and parotid gland, low amounts in kidney, liver, small intestine, stomach and thymus.

It is found in the secreted. The protein localises to the zymogen granule. The protein resides in the nucleus envelope. The catalysed reaction is Endonucleolytic cleavage to 5'-phosphodinucleotide and 5'-phosphooligonucleotide end-products.. Functionally, serum endocuclease secreted into body fluids by a wide variety of exocrine and endocrine organs. Expressed by non-hematopoietic tissues and preferentially cleaves protein-free DNA. Among other functions, seems to be involved in cell death by apoptosis. Binds specifically to G-actin and blocks actin polymerization. Preferentially attacks double-stranded DNA and produces oligonucleotides with 5'-phospho and 3'-hydroxy termini. Together with DNASE1L3, plays a key role in degrading neutrophil extracellular traps (NETs). NETs are mainly composed of DNA fibers and are released by neutrophils to bind pathogens during inflammation. Degradation of intravascular NETs by DNASE1 and DNASE1L3 is required to prevent formation of clots that obstruct blood vessels and cause organ damage following inflammation. The polypeptide is Deoxyribonuclease-1 (DNASE1) (Oryctolagus cuniculus (Rabbit)).